We begin with the raw amino-acid sequence, 161 residues long: Eukaryotic translation initiation factor 5A-1 (161 aa).

Basic and acidic residues predominate over residues 1–12 (MSDEEHQFESKA). Positions 1-21 (MSDEEHQFESKADAGASKTYP) are disordered. A Hypusine modification is found at Lys-52.

This sequence belongs to the eIF-5A family. Lys-52 undergoes hypusination, a unique post-translational modification that consists in the addition of a butylamino group from spermidine to lysine side chain, leading to the formation of the unusual amino acid hypusine. eIF-5As are the only known proteins to undergo this modification, which is essential for their function.

Functionally, translation factor that promotes translation elongation and termination, particularly upon ribosome stalling at specific amino acid sequence contexts. Binds between the exit (E) and peptidyl (P) site of the ribosome and promotes rescue of stalled ribosome: specifically required for efficient translation of polyproline-containing peptides as well as other motifs that stall the ribosome. Acts as a ribosome quality control (RQC) cofactor by joining the RQC complex to facilitate peptidyl transfer during CAT tailing step. The chain is Eukaryotic translation initiation factor 5A-1 from Medicago sativa (Alfalfa).